Reading from the N-terminus, the 302-residue chain is MKKNRLNLNGVVVINKAKDISSNKVLQQLKYLFNAQKVGHTGTLDPMATGVLPICFGRATKIAQYLLDADKEYIATIRLGIETDSGDAEGEIIAKSINIPELSAEYLETVLAKFRGDVVQIPPMYSALKYNGQPLYKLAREGKTVEVKSRNIKIYELELLEFNIDSLKIRVKCSKGTYIRSLAIDIGKTLGCGGHLIALQRTQSGPFKLSEAFRLEQLKDLSFEQKIASITNIESVFIDKPIYSLLEEEKDDLYKRGLFADKPHLDGTVRIYDVEKFVAIAEFDKGKLINKKFFDQDILISE.

Asp45 acts as the Nucleophile in catalysis.

This sequence belongs to the pseudouridine synthase TruB family. Type 1 subfamily.

The enzyme catalyses uridine(55) in tRNA = pseudouridine(55) in tRNA. Its function is as follows. Responsible for synthesis of pseudouridine from uracil-55 in the psi GC loop of transfer RNAs. The protein is tRNA pseudouridine synthase B of Francisella tularensis subsp. tularensis (strain WY96-3418).